A 690-amino-acid chain; its full sequence is Polyphosphate kinase (690 aa).

An ATP-binding site is contributed by Asn45. The Mg(2+) site is built by Arg375 and Arg405. The active-site Phosphohistidine intermediate is His435. ATP contacts are provided by Tyr468, Arg564, and His592.

It belongs to the polyphosphate kinase 1 (PPK1) family. Mg(2+) is required as a cofactor. An intermediate of this reaction is the autophosphorylated ppk in which a phosphate is covalently linked to a histidine residue through a N-P bond.

The enzyme catalyses [phosphate](n) + ATP = [phosphate](n+1) + ADP. Catalyzes the reversible transfer of the terminal phosphate of ATP to form a long-chain polyphosphate (polyP). This is Polyphosphate kinase from Pseudomonas aeruginosa (strain ATCC 15692 / DSM 22644 / CIP 104116 / JCM 14847 / LMG 12228 / 1C / PRS 101 / PAO1).